The following is a 38-amino-acid chain: Potassium channel toxin alpha-KTx 2.13 (38 aa).

3 cysteine pairs are disulfide-bonded: Cys-7/Cys-29, Cys-13/Cys-34, and Cys-17/Cys-36.

This sequence belongs to the short scorpion toxin superfamily. Potassium channel inhibitor family. Alpha-KTx 02 subfamily. Expressed by the venom gland.

The protein resides in the secreted. In terms of biological role, selective inhibitor of voltage-gated potassium channels, blocks the Kv1.2/KCNA2 (Kd=1.3 nM) and Kv1.3/KCNA3 (Kd=7.2 nM) channels. Association and dissociation rates of the toxin are slower for Kv1.2/KCNA2 than for Kv1.3/KCNA3. This chain is Potassium channel toxin alpha-KTx 2.13, found in Centruroides suffusus (Durango bark scorpion).